A 525-amino-acid chain; its full sequence is GMP synthase [glutamine-hydrolyzing] (525 aa).

One can recognise a Glutamine amidotransferase type-1 domain in the interval 9-207 (RILILDFGSQ…VLDICGCAAL (199 aa)). Catalysis depends on Cys-86, which acts as the Nucleophile. Catalysis depends on residues His-181 and Glu-183. One can recognise a GMPS ATP-PPase domain in the interval 208–400 (WTPSNIVDDA…LGLPYDMVYR (193 aa)). 235-241 (SGGVDSS) lines the ATP pocket.

In terms of assembly, homodimer.

It catalyses the reaction XMP + L-glutamine + ATP + H2O = GMP + L-glutamate + AMP + diphosphate + 2 H(+). It participates in purine metabolism; GMP biosynthesis; GMP from XMP (L-Gln route): step 1/1. Functionally, catalyzes the synthesis of GMP from XMP. The chain is GMP synthase [glutamine-hydrolyzing] from Pseudomonas aeruginosa (strain UCBPP-PA14).